The chain runs to 156 residues: Ribosomal RNA large subunit methyltransferase H (156 aa).

S-adenosyl-L-methionine contacts are provided by residues leucine 73, glycine 104, and 123–128; that span reads LSALTL.

The protein belongs to the RNA methyltransferase RlmH family. Homodimer.

The protein localises to the cytoplasm. It catalyses the reaction pseudouridine(1915) in 23S rRNA + S-adenosyl-L-methionine = N(3)-methylpseudouridine(1915) in 23S rRNA + S-adenosyl-L-homocysteine + H(+). Functionally, specifically methylates the pseudouridine at position 1915 (m3Psi1915) in 23S rRNA. This Shewanella pealeana (strain ATCC 700345 / ANG-SQ1) protein is Ribosomal RNA large subunit methyltransferase H.